We begin with the raw amino-acid sequence, 358 residues long: Peptide chain release factor 1 (358 aa).

At Gln-233 the chain carries N5-methylglutamine. The segment covering 282 to 306 (QRAASERSADRRGQVGSGDRSERVR) has biased composition (basic and acidic residues). The segment at 282-308 (QRAASERSADRRGQVGSGDRSERVRTY) is disordered.

This sequence belongs to the prokaryotic/mitochondrial release factor family. In terms of processing, methylated by PrmC. Methylation increases the termination efficiency of RF1.

The protein resides in the cytoplasm. Functionally, peptide chain release factor 1 directs the termination of translation in response to the peptide chain termination codons UAG and UAA. The polypeptide is Peptide chain release factor 1 (Afipia carboxidovorans (strain ATCC 49405 / DSM 1227 / KCTC 32145 / OM5) (Oligotropha carboxidovorans)).